The following is a 456-amino-acid chain: Ribosomal RNA small subunit methyltransferase F (456 aa).

Residues 109–115 (AAAPGGK), E133, R138, and D177 each bind S-adenosyl-L-methionine. C230 functions as the Nucleophile in the catalytic mechanism.

The protein belongs to the class I-like SAM-binding methyltransferase superfamily. RsmB/NOP family.

It localises to the cytoplasm. The enzyme catalyses cytidine(1400) in 16S rRNA + S-adenosyl-L-methionine = 5-methylcytidine(1400) in 16S rRNA + S-adenosyl-L-homocysteine + H(+). It carries out the reaction cytidine(1404) in 16S rRNA + S-adenosyl-L-methionine = 5-methylcytidine(1404) in 16S rRNA + S-adenosyl-L-homocysteine + H(+). The catalysed reaction is cytidine(1407) in 16S rRNA + S-adenosyl-L-methionine = 5-methylcytidine(1407) in 16S rRNA + S-adenosyl-L-homocysteine + H(+). Functionally, specifically methylates the cytosines at positions 1400 (m5C1400), 1404 (m5C1404) and 1407 (m5C1407) of 16S rRNA. C1400, C1404 and C1407 are methylated in a 30S subunit substrate, but only C1400 and C1404 are methylated when naked 16S rRNA is the substrate. Methylation by RsmF may facilitate growth at temperatures outside the optimal growth temperature. This chain is Ribosomal RNA small subunit methyltransferase F, found in Thermus thermophilus (strain ATCC 27634 / DSM 579 / HB8).